We begin with the raw amino-acid sequence, 634 residues long: MATSNNPRKFSEKIALHNQKQAEETAAFEEVMKDLSLTRAARLQLQKSQYLQLGPSRGQYYGGSLPNVNQIGSGTMDLPFQTPFQSSGLDTSRTTRHHGLVDRVYRERGRLGSPHRRPLSVDKHGRQADSCPYGTMYLSPPADTSWRRTNSDSALHQSTMTPTQPESFSSGSQDVHQKRVLLLTVPGMEETTSEADKNLSKQAWDTKKTGSRPKSCEVPGINIFPSADQENTTALIPATHNTGGSLPDLTNIHFPSPLPTPLDPEEPTFPALSSSSSTGNLAANLTHLGIGGAGQGMSTPGSSPQHRPAGVSPLSLSTEARRQQASPTLSPLSPITQAVAMDALSLEQQLPYAFFTQAGSQQPPPQPQPPPPPPPASQQPPPPPPPQAPVRLPPGGPLLPSASLTRGPQPPPLAVTVPSSLPQSPPENPGQPSMGIDIASAPALQQYRTSAGSPANQSPTSPVSNQGFSPGSSPQHTSTLGSVFGDAYYEQQMAARQANALSHQLEQFNMMENAISSSSLYSPGSTLNYSQAAMMGLTGSHGSLPDSQQLGYASHSGIPNIILTVTGESPPSLSKELTSSLAGVGDVSFDSDSQFPLDELKIDPLTLDGLHMLNDPDMVLADPATEDTFRMDRL.

Residues Ser64 and Ser113 each carry the phosphoserine modification. Disordered regions lie at residues 110 to 174 (RLGS…GSQD), 191 to 221 (TTSE…VPGI), 258 to 331 (LPTP…TLSP), and 357 to 479 (QAGS…HTST). Thr149 carries the post-translational modification Phosphothreonine. A Phosphoserine; by SIK1 and SIK2 modification is found at Ser151. Residues 151 to 174 (SDSALHQSTMTPTQPESFSSGSQD) are compositionally biased toward polar residues. Thr161 carries the phosphothreonine modification. Residues 194–208 (EADKNLSKQAWDTKK) show a composition bias toward basic and acidic residues. The Nuclear export signal motif lies at 242 to 258 (TGGSLPDLTNIHFPSPL). 3 stretches are compositionally biased toward polar residues: residues 271–283 (ALSS…NLAA), 296–305 (GMSTPGSSPQ), and 314–331 (LSLS…TLSP). A compositionally biased stretch (pro residues) spans 362-397 (QPPPQPQPPPPPPPASQQPPPPPPPQAPVRLPPGGP). Positions 446–479 (QYRTSAGSPANQSPTSPVSNQGFSPGSSPQHTST) are enriched in polar residues.

Belongs to the TORC family. Binds, as a tetramer, through its N-terminal region, with the bZIP domain of CREB1. 'Arg-314' in the bZIP domain of CREB1 is essential for this interaction. Interaction, via its C-terminal, with TAF4, enhances recruitment of TAF4 to CREB1. Interacts with 14-3-3 proteins, including YWHAE/14-3-3 epsilon. Interacts with calmodulin-dependent catalytic subunit PPP3CA/calcineurin A. In terms of assembly, (Microbial infection) Interacts with HTLV1 Tax. Phosphorylation/dephosphorylation states of Ser-151 are required for regulating transduction of CREB activity. TORCs are inactive when phosphorylated, and active when dephosphorylated at this site. This primary site of phosphorylation is mediated by SIKs (SIK1 and SIK2), is regulated by cAMP and calcium levels and is dependent on the phosphorylation of SIKs by LKB1. Highly expressed in adult and fetal brain. Located to specific regions such as the prefrontal cortex and cerebellum. Very low expression in other tissues such as heart, spleen, lung, skeletal muscle, salivary gland, ovary and kidney.

The protein localises to the cytoplasm. It localises to the nucleus. Transcriptional coactivator for CREB1 which activates transcription through both consensus and variant cAMP response element (CRE) sites. Acts as a coactivator, in the SIK/TORC signaling pathway, being active when dephosphorylated and acts independently of CREB1 'Ser-133' phosphorylation. Enhances the interaction of CREB1 with TAF4. Regulates the expression of specific CREB-activated genes such as the steroidogenic gene, StAR. Potent coactivator of PGC1alpha and inducer of mitochondrial biogenesis in muscle cells. In the hippocampus, involved in late-phase long-term potentiation (L-LTP) maintenance at the Schaffer collateral-CA1 synapses. May be required for dendritic growth of developing cortical neurons. In concert with SIK1, regulates the light-induced entrainment of the circadian clock. In response to light stimulus, coactivates the CREB-mediated transcription of PER1 which plays an important role in the photic entrainment of the circadian clock. Functionally, (Microbial infection) Plays a role of coactivator for TAX activation of the human T-cell leukemia virus type 1 (HTLV-1) long terminal repeats (LTR). In Homo sapiens (Human), this protein is CREB-regulated transcription coactivator 1.